We begin with the raw amino-acid sequence, 414 residues long: Nuclear hormone receptor family member nhr-213 (414 aa).

Positions 21 to 99 form a DNA-binding region, nuclear receptor; the sequence is IVLCKVCALS…LGMTPENVQF (79 aa). 2 NR C4-type zinc fingers span residues 24-44 and 62-82; these read CKVC…CRAC and CKKG…CRLC. One can recognise an NR LBD domain in the interval 162-414; sequence SAAKKMNSLE…DFSDPDIFDC (253 aa).

The protein belongs to the nuclear hormone receptor family.

Its subcellular location is the nucleus. Its function is as follows. Orphan nuclear receptor. This is Nuclear hormone receptor family member nhr-213 (nhr-213) from Caenorhabditis elegans.